The chain runs to 141 residues: Hemoglobin subunit alpha (141 aa).

In terms of domain architecture, Globin spans 1–141 (VLSPADKTNV…VSTVLTSKYR (141 aa)). S3 carries the post-translational modification Phosphoserine. K7 is modified (N6-succinyllysine). At T8 the chain carries Phosphothreonine. K11 carries the N6-succinyllysine modification. Position 16 is an N6-acetyllysine; alternate (K16). Residue K16 is modified to N6-succinyllysine; alternate. Position 24 is a phosphotyrosine (Y24). S35 carries the phosphoserine modification. N6-succinyllysine is present on K40. A Phosphoserine modification is found at S49. Residue H58 participates in O2 binding. H87 lines the heme b pocket. S102 bears the Phosphoserine mark. Residue T108 is modified to Phosphothreonine. S124 bears the Phosphoserine mark. T134 and T137 each carry phosphothreonine. At S138 the chain carries Phosphoserine.

Belongs to the globin family. In terms of assembly, heterotetramer of two alpha chains and two beta chains. Red blood cells.

In terms of biological role, involved in oxygen transport from the lung to the various peripheral tissues. Its function is as follows. Hemopressin acts as an antagonist peptide of the cannabinoid receptor CNR1. Hemopressin-binding efficiently blocks cannabinoid receptor CNR1 and subsequent signaling. The polypeptide is Hemoglobin subunit alpha (HBA) (Pteronura brasiliensis (Giant otter)).